The chain runs to 137 residues: Acidic phospholipase A2 beta-bungarotoxin A chain (137 aa).

The first 9 residues, 1 to 9 (AVCVSLLGA), serve as a signal peptide directing secretion. The propeptide occupies 10-17 (ANIPPHPL). 6 disulfide bridges follow: C44–C136, C46–C62, C61–C117, C68–C110, C78–C103, and C96–C108. Ca(2+) contacts are provided by Y45, G47, and G49. Residue H65 is part of the active site. D66 lines the Ca(2+) pocket. D111 is a catalytic residue.

It belongs to the phospholipase A2 family. Group I subfamily. D49 sub-subfamily. As to quaternary structure, heterodimer; disulfide-linked. The A chain has phospholipase A2 activity and the B chain shows homology with the basic protease inhibitors. Ca(2+) serves as cofactor. As to expression, expressed by the venom gland.

The protein resides in the secreted. It catalyses the reaction a 1,2-diacyl-sn-glycero-3-phosphocholine + H2O = a 1-acyl-sn-glycero-3-phosphocholine + a fatty acid + H(+). Its function is as follows. Beta bungarotoxin is a presynaptic neurotoxin. The A chain has phospholipase activity. PLA2 catalyzes the calcium-dependent hydrolysis of the 2-acyl groups in 3-sn-phosphoglycerides. This chain is Acidic phospholipase A2 beta-bungarotoxin A chain, found in Bungarus candidus (Malayan krait).